We begin with the raw amino-acid sequence, 438 residues long: MDSGSPYHWLRELRYDSHGSNPMIPLIECAKCVASGSIKTADIGLEYISQISSPHGNGVQRMVTYFSEALGYKIVKHLPGVYKALNSSKISLSSDDILVQKYFYDLCPFLKFSYLITNQAIIESMEREKVVHIIDLHCSEPAQWINLIQTLKKRPGGPPFLKITGINEKKEALEQMSFHLTTEAGILDFPLQFNPIISKLEDVDFENLPVKTGDAVAISSVLQLHSLLATDDEMVSSSGAASFNMQRAAHLGQRTFAEWLERDMINAYILSPDSALSPLFLGASPKMGIFLNAMRKLQPKLLVITEQESNLNGCNLTERIDRALYFYGSLFDCLESTVTRTSVERQKLESMLLGEQIKNIITCEGVDRKERHEKLEQWIQRLKMAGFVKVPLSYNGRIEATNLLQRYSHKYKFKEENDCLLVCWSDRPLFSVSAWKFR.

Residues 13-436 (LRYDSHGSNP…RPLFSVSAWK (424 aa)) form the GRAS domain. Positions 20-81 (SNPMIPLIEC…YKIVKHLPGV (62 aa)) are leucine repeat I (LRI). The VHIID stretch occupies residues 100 to 165 (QKYFYDLCPF…GGPPFLKITG (66 aa)). The VHIID motif lies at 131–135 (VHIID). Residues 175–207 (QMSFHLTTEAGILDFPLQFNPIISKLEDVDFEN) form a leucine repeat II (LRII) region. The interval 216–359 (VAISSVLQLH…SMLLGEQIKN (144 aa)) is PFYRE. The LXXLL motif signature appears at 224–228 (LHSLL). The segment at 362–436 (TCEGVDRKER…RPLFSVSAWK (75 aa)) is SAW.

It belongs to the GRAS family. As to quaternary structure, interacts with RAM1.

The protein resides in the nucleus. The protein is GRAS family protein TF80 (TF80) of Medicago truncatula (Barrel medic).